Consider the following 1009-residue polypeptide: Ulvan lyase, long isoform (1009 aa).

The first 32 residues, 1–32, serve as a signal peptide directing secretion; sequence MTAQKSKYFNRIMTMNTLLFSLLTVGFSQAYA. 137–138 contributes to the substrate binding site; it reads SH. The Proton donor/acceptor role is filled by His-138. Ca(2+)-binding residues include Asp-200, Asp-210, and Lys-212. Residues Tyr-291 and Arg-308 each contribute to the substrate site. Ca(2+) contacts are provided by Asp-311, Asp-314, and Tyr-316. Residue Tyr-372 coordinates substrate.

This sequence belongs to the polysaccharide lyase 24 family.

Its function is as follows. Ulvan lyase involved in ulvan degradation. Ulvan is the main polysaccharide component of the Ulvales (green seaweed) cell wall. It is composed of disaccharide building blocks comprising 3-sulfated rhamnose (Rha3S) linked to D-glucuronic acid (GlcA), L-iduronic acid (IduA), or D-xylose (Xyl). Ulvan lyase catalyzes preferentially the endolytic cleavage of the glycosidic bond between Rha3S and the uronic acid GlcA, but not IduA, producing oligosaccharides that have unsaturated 4-deoxy-L-threo-hex-4-enopyranosiduronic acid (deltaUA) at the non-reducing end. The most abundant end products in the degradation of the ulvan polysaccharide were deltaUA-Rha3S disaccharides and deltaUA-Rha3S-IduA-Rha3S and deltaUA-Rha3S-Xyl-Rha3S tetrasaccharides. The sequence is that of Ulvan lyase, long isoform (ullA) from Glaciecola sp. (strain KUL10).